The primary structure comprises 142 residues: Nucleoside diphosphate kinase (142 aa).

The ATP site is built by lysine 11, phenylalanine 59, arginine 87, threonine 93, arginine 104, and asparagine 114. Histidine 117 (pros-phosphohistidine intermediate) is an active-site residue.

The protein belongs to the NDK family. Homotetramer. The cofactor is Mg(2+).

Its subcellular location is the cytoplasm. The catalysed reaction is a 2'-deoxyribonucleoside 5'-diphosphate + ATP = a 2'-deoxyribonucleoside 5'-triphosphate + ADP. It carries out the reaction a ribonucleoside 5'-diphosphate + ATP = a ribonucleoside 5'-triphosphate + ADP. In terms of biological role, major role in the synthesis of nucleoside triphosphates other than ATP. The ATP gamma phosphate is transferred to the NDP beta phosphate via a ping-pong mechanism, using a phosphorylated active-site intermediate. In Photobacterium profundum (strain SS9), this protein is Nucleoside diphosphate kinase.